Here is a 749-residue protein sequence, read N- to C-terminus: Transcription factor RFX3 (749 aa).

Positions 183-258 (HLQWLLDNYE…YHYYGIRVKP (76 aa)) form a DNA-binding region, RFX-type winged-helix. Positions 663–699 (VSPGNLDKDEGSEVESETDEDLDDSSEPRAKREKTEL) are disordered. Positions 674–687 (SEVESETDEDLDDS) are enriched in acidic residues. Positions 688-698 (SEPRAKREKTE) are enriched in basic and acidic residues.

Belongs to the RFX family. In terms of assembly, heterodimer; heterodimerizes with RFX1 and RFX2, and RFX6. In terms of tissue distribution, expressed in ciliated cells of the node and in the ciliated ependymal cells of the subcommissural organ (SCO), choroid plexuses (CP) and ventricular walls during embryonic and postnatal development. Expressed in developing and mature pancreatic endocrine cells during embryogenesis and in adults (at protein level).

It is found in the nucleus. Transcription factor required for ciliogenesis and islet cell differentiation during endocrine pancreas development. Essential for the differentiation of nodal monocilia and left-right asymmetry specification during embryogenesis. Required for the biogenesis of motile cilia by governing growth and beating efficiency of motile cells. Also required for ciliated ependymal cell differentiation. Together with RFX6, participates in the differentiation of 4 of the 5 islet cell types during endocrine pancreas development, with the exception of pancreatic PP (polypeptide-producing) cells. Regulates transcription by forming a heterodimer with another RFX protein and binding to the X-box in the promoter of target genes. Regulates the expression of genes involved in ciliary assembly (DYNC2LI1, FOXJ1 and BBS4) and genes involved in ciliary motility (DNAH11, DNAH9 and DNAH5). Represses transcription of MAP1A in non-neuronal cells but not in neuronal cells. This is Transcription factor RFX3 (Rfx3) from Mus musculus (Mouse).